The chain runs to 338 residues: Ketol-acid reductoisomerase (NADP(+)) (338 aa).

In terms of domain architecture, KARI N-terminal Rossmann spans 1–181; it reads MKVYYDKDAD…GGTKGGVIET (181 aa). Residues 24–27, arginine 47, and serine 52 contribute to the NADP(+) site; that span reads YGSQ. Histidine 107 is an active-site residue. Glycine 133 contributes to the NADP(+) binding site. Positions 182-327 constitute a KARI C-terminal knotted domain; it reads NFKEETETDL…GQLRDMMPWI (146 aa). Residues aspartate 190, glutamate 194, glutamate 226, and glutamate 230 each contribute to the Mg(2+) site. Serine 251 contacts substrate.

This sequence belongs to the ketol-acid reductoisomerase family. It depends on Mg(2+) as a cofactor.

It carries out the reaction (2R)-2,3-dihydroxy-3-methylbutanoate + NADP(+) = (2S)-2-acetolactate + NADPH + H(+). It catalyses the reaction (2R,3R)-2,3-dihydroxy-3-methylpentanoate + NADP(+) = (S)-2-ethyl-2-hydroxy-3-oxobutanoate + NADPH + H(+). Its pathway is amino-acid biosynthesis; L-isoleucine biosynthesis; L-isoleucine from 2-oxobutanoate: step 2/4. It participates in amino-acid biosynthesis; L-valine biosynthesis; L-valine from pyruvate: step 2/4. Functionally, involved in the biosynthesis of branched-chain amino acids (BCAA). Catalyzes an alkyl-migration followed by a ketol-acid reduction of (S)-2-acetolactate (S2AL) to yield (R)-2,3-dihydroxy-isovalerate. In the isomerase reaction, S2AL is rearranged via a Mg-dependent methyl migration to produce 3-hydroxy-3-methyl-2-ketobutyrate (HMKB). In the reductase reaction, this 2-ketoacid undergoes a metal-dependent reduction by NADPH to yield (R)-2,3-dihydroxy-isovalerate. The chain is Ketol-acid reductoisomerase (NADP(+)) from Azoarcus sp. (strain BH72).